A 152-amino-acid chain; its full sequence is MYPAHLLGLLAVCVSLLGAASIPPLPLNLYQFKNMIQCANHGSRMTLDYMDYGCYCGTGGSGTPVDELDRCCKIHDDCYGEAEKLPACNYMLSGPYYNLYTYDCVEHQLTCKDNNDECKAFICNCDRTAAICFAGAPYNKENYNIDLNKHCQ.

An N-terminal signal peptide occupies residues 1-21 (MYPAHLLGLLAVCVSLLGAAS). Residues 22-27 (IPPLPL) constitute a propeptide that is removed on maturation. Intrachain disulfides connect cysteine 38–cysteine 104, cysteine 54–cysteine 151, cysteine 56–cysteine 72, cysteine 71–cysteine 132, cysteine 78–cysteine 125, cysteine 88–cysteine 118, and cysteine 111–cysteine 123. Residues tyrosine 55, glycine 57, and glycine 59 each contribute to the Ca(2+) site. Residue histidine 75 is part of the active site. Aspartate 76 contacts Ca(2+). Residue aspartate 126 is part of the active site.

It belongs to the phospholipase A2 family. Group I subfamily. D49 sub-subfamily. Requires Ca(2+) as cofactor. Expressed by the venom gland.

The protein resides in the secreted. It catalyses the reaction a 1,2-diacyl-sn-glycero-3-phosphocholine + H2O = a 1-acyl-sn-glycero-3-phosphocholine + a fatty acid + H(+). PLA2 catalyzes the calcium-dependent hydrolysis of the 2-acyl groups in 3-sn-phosphoglycerides. This Hydrophis hardwickii (Hardwick's spine-bellied seasnake) protein is Acidic phospholipase A2 57.